The chain runs to 490 residues: MEICLFPATLQSWTGDVLMVGMFEGKMEERLNELETLCKGSLMQSLEKQMFKGKSGEIATVQLLQNKPNLLVLVGLGEPQEMRLDDLRKAAALGAKASLGCSGTLGMMLPWEPLDAASAARAVAEAVRLSLYKDLRFRSAPEPRSTPTKLELIGLPDSAGKDLQAVHPTCAGVELARQLVAAPANSLTPAALAQTAIQLAHEHGLECSVLERSDCAEREMGAYLAVSQGSDLEPKFIHLTYRPQGPVQRRLALVGKGLTFDSGGYNLKVGAAQIDLMKFDMGGSAAVLGAARAIAELRPKGVEVHVIVAACENMVNGSAVHPGDLVRASNGTTIEINNTDAEGRLTLADALVYTCGLEPDAIVDLATLTGACVIALGEEIAGLWTGHDPLAEGLTAAAEAAGEGLWRMPLPSSYREGLKSNLADLKNTGPRPGGSITAALFLKEFVEASIPWAHIDIAGTVWSEKGRGLNPSGATGYGVRTLVNWICSQS.

Lys-256 and Asp-261 together coordinate Mn(2+). Lys-268 is an active-site residue. Mn(2+) contacts are provided by Asp-280, Asp-340, and Glu-342. Residue Arg-344 is part of the active site.

Belongs to the peptidase M17 family. Mn(2+) serves as cofactor.

It is found in the cytoplasm. It catalyses the reaction Release of an N-terminal amino acid, Xaa-|-Yaa-, in which Xaa is preferably Leu, but may be other amino acids including Pro although not Arg or Lys, and Yaa may be Pro. Amino acid amides and methyl esters are also readily hydrolyzed, but rates on arylamides are exceedingly low.. It carries out the reaction Release of an N-terminal amino acid, preferentially leucine, but not glutamic or aspartic acids.. Functionally, presumably involved in the processing and regular turnover of intracellular proteins. Catalyzes the removal of unsubstituted N-terminal amino acids from various peptides. This is Probable cytosol aminopeptidase from Prochlorococcus marinus (strain MIT 9313).